Here is a 330-residue protein sequence, read N- to C-terminus: Peroxisomal membrane protein PEX13 (330 aa).

The segment covering 1–14 has biased composition (pro residues); it reads MSAPPTNQPPPLPP. A disordered region spans residues 1–20; that stretch reads MSAPPTNQPPPLPPRSFDNQ. A helical transmembrane segment spans residues 193 to 213; it reads ASVNWPAALFWVVAIGGPWLI. The 66-residue stretch at 235–300 folds into the SH3 domain; the sequence is APHYTAQALF…PINYVRIVGK (66 aa).

Belongs to the peroxin-13 family. Interacts with PEX14/prx-14; forming the PEX13-PEX14 docking complex.

It is found in the peroxisome membrane. Component of the PEX13-PEX14 docking complex, a translocon channel that specifically mediates the import of peroxisomal cargo proteins bound to PEX5/prx-5 receptor. The PEX13-PEX14 docking complex forms a large import pore which can be opened to a diameter of about 9 nm. Mechanistically, PEX5/prx-5 receptor along with cargo proteins associates with the PEX14/prx-14 subunit of the PEX13-PEX14 docking complex in the cytosol, leading to the insertion of the receptor into the organelle membrane with the concomitant translocation of the cargo into the peroxisome matrix. The protein is Peroxisomal membrane protein PEX13 (prx-13) of Caenorhabditis elegans.